Here is a 282-residue protein sequence, read N- to C-terminus: Tumor necrosis factor ligand superfamily member 6 (282 aa).

The Cytoplasmic segment spans residues 1-82; the sequence is MQQPFNYPYP…KKKRDHNAGL (82 aa). The tract at residues 30–73 is disordered; the sequence is FPCPASVPGRPGQRRPPPPPPPPPPPPTLLPSRPLPPLPPPSLK. Residues 43–71 are compositionally biased toward pro residues; the sequence is RRPPPPPPPPPPPPTLLPSRPLPPLPPPS. Residues 83 to 103 form a helical; Signal-anchor for type II membrane protein membrane-spanning segment; sequence CLLVMFFMVLVALVGLGLGMF. Over 104–282 the chain is Extracellular; that stretch reads QLFHLQKELT…SKTFFGLYKL (179 aa). Residues 119 to 132 are compositionally biased toward basic and acidic residues; it reads ASQRHTESSLEKQI. A disordered region spans residues 119 to 140; that stretch reads ASQRHTESSLEKQIGHPNLPSE. The THD domain occupies 146–282; it reads KVAHLTGKPN…SKTFFGLYKL (137 aa). Asn-185 is a glycosylation site (N-linked (GlcNAc...) asparagine). Cysteines 203 and 234 form a disulfide. N-linked (GlcNAc...) asparagine glycosylation is found at Asn-251 and Asn-261.

This sequence belongs to the tumor necrosis factor family. In terms of assembly, homotrimer. Interacts with ARHGAP9, BAIAP2L1, BTK, CACNB3, CACNB4, CRK, DLG2, DNMBP, DOCK4, EPS8L3, FGR, FYB1, FYN, HCK, ITK, ITSN2, KALRN, LYN, MACC1, MIA, MPP4, MYO15A, NCF1, NCK1, NCK2, NCKIPSD, OSTF1, PIK3R1, PSTPIP1, RIMBP3C, SAMSN1, SH3GL3, SH3PXD2B, SH3PXD2A, SH3RF2, SKAP2, SNX33, SNX9, SORBS3, SPTA1, SRC, SRGAP1, SRGAP2, SRGAP3, TEC, TJP3 and YES1. The soluble form derives from the membrane form by proteolytic processing. The membrane-bound form undergoes two successive intramembrane proteolytic cleavages. The first one is processed by ADAM10 producing an N-terminal fragment, which lacks the receptor-binding extracellular domain. This ADAM10-processed FasL (FasL APL) remnant form is still membrane anchored and further processed by SPPL2A that liberates the FasL intracellular domain (FasL ICD). FasL shedding by ADAM10 is a prerequisite for subsequent intramembrane cleavage by SPPL2A in T-cells. In terms of processing, phosphorylated by FGR on tyrosine residues; this is required for ubiquitination and subsequent internalization. Post-translationally, N-glycosylated. Glycosylation enhances apoptotic activity. Monoubiquitinated.

Its subcellular location is the cell membrane. It is found in the cytoplasmic vesicle lumen. It localises to the lysosome lumen. The protein localises to the secreted. The protein resides in the nucleus. Its function is as follows. Cytokine that binds to TNFRSF6/FAS, a receptor that transduces the apoptotic signal into cells. Involved in cytotoxic T-cell-mediated apoptosis, natural killer cell-mediated apoptosis and in T-cell development. Initiates fratricidal/suicidal activation-induced cell death (AICD) in antigen-activated T-cells contributing to the termination of immune responses. TNFRSF6/FAS-mediated apoptosis also has a role in the induction of peripheral tolerance. Binds to TNFRSF6B/DcR3, a decoy receptor that blocks apoptosis. In terms of biological role, induces FAS-mediated activation of NF-kappa-B, initiating non-apoptotic signaling pathways. Can induce apoptosis but does not appear to be essential for this process. Cytoplasmic form induces gene transcription inhibition. In Sus scrofa (Pig), this protein is Tumor necrosis factor ligand superfamily member 6 (FASLG).